The sequence spans 193 residues: MRLFGLILAGGEGRRMGGTDKASLTLGGRPLVTWVAERLGPQVEELAISANGDPARFAGLGLPVLRDEHPQGPLSGVLAGLRWAAAAGADALVTAPVDTPFVPGDLAPRLWLAGEGACAVAEAGGRVHPACGLWPVAVAEDLAAWLAAGEARVMGFAARHGAARAGFPDENAFLNLNAPEDLARAESLLRKDA.

GTP is bound by residues 8-10 (LAG), K21, D67, and D98. D98 lines the Mg(2+) pocket.

This sequence belongs to the MobA family. Monomer. Mg(2+) is required as a cofactor.

It is found in the cytoplasm. It carries out the reaction Mo-molybdopterin + GTP + H(+) = Mo-molybdopterin guanine dinucleotide + diphosphate. Functionally, transfers a GMP moiety from GTP to Mo-molybdopterin (Mo-MPT) cofactor (Moco or molybdenum cofactor) to form Mo-molybdopterin guanine dinucleotide (Mo-MGD) cofactor. The sequence is that of Molybdenum cofactor guanylyltransferase from Cereibacter sphaeroides (Rhodobacter sphaeroides).